Here is a 471-residue protein sequence, read N- to C-terminus: ATP synthase subunit beta (471 aa).

G154–T161 provides a ligand contact to ATP.

The protein belongs to the ATPase alpha/beta chains family. As to quaternary structure, F-type ATPases have 2 components, CF(1) - the catalytic core - and CF(0) - the membrane proton channel. CF(1) has five subunits: alpha(3), beta(3), gamma(1), delta(1), epsilon(1). CF(0) has three main subunits: a(1), b(2) and c(9-12). The alpha and beta chains form an alternating ring which encloses part of the gamma chain. CF(1) is attached to CF(0) by a central stalk formed by the gamma and epsilon chains, while a peripheral stalk is formed by the delta and b chains.

It is found in the cell membrane. It carries out the reaction ATP + H2O + 4 H(+)(in) = ADP + phosphate + 5 H(+)(out). Its function is as follows. Produces ATP from ADP in the presence of a proton gradient across the membrane. The catalytic sites are hosted primarily by the beta subunits. The protein is ATP synthase subunit beta of Mesomycoplasma hyopneumoniae (strain 232) (Mycoplasma hyopneumoniae).